A 367-amino-acid chain; its full sequence is Flagellar P-ring protein (367 aa).

The N-terminal stretch at 1–21 (MYVFKALAGIVLALVATLAHA) is a signal peptide.

This sequence belongs to the FlgI family. In terms of assembly, the basal body constitutes a major portion of the flagellar organelle and consists of four rings (L,P,S, and M) mounted on a central rod.

It is found in the periplasm. It localises to the bacterial flagellum basal body. Its function is as follows. Assembles around the rod to form the L-ring and probably protects the motor/basal body from shearing forces during rotation. The sequence is that of Flagellar P-ring protein from Salmonella choleraesuis (strain SC-B67).